Reading from the N-terminus, the 795-residue chain is Phenylalanine--tRNA ligase beta subunit (795 aa).

Positions 39 to 148 constitute a tRNA-binding domain; it reads AGTFNGVKVG…IDAPIGMDFR (110 aa). The B5 domain occupies 401–476; the sequence is PKPNKVALRR…RIYGYDNIPN (76 aa). Mg(2+)-binding residues include Asp454, Asp460, Glu463, and Glu464. Residues 701–794 enclose the FDX-ACB domain; that stretch reads SKFPANRRDI…VSEKFGASLR (94 aa).

Belongs to the phenylalanyl-tRNA synthetase beta subunit family. Type 1 subfamily. In terms of assembly, tetramer of two alpha and two beta subunits. Mg(2+) serves as cofactor.

The protein resides in the cytoplasm. The catalysed reaction is tRNA(Phe) + L-phenylalanine + ATP = L-phenylalanyl-tRNA(Phe) + AMP + diphosphate + H(+). This chain is Phenylalanine--tRNA ligase beta subunit, found in Vibrio vulnificus (strain CMCP6).